The chain runs to 120 residues: Fumarate reductase subunit D (120 aa).

Transmembrane regions (helical) follow at residues 25-45 (FAMLTPVTILVLGIMVPLGIL), 57-77 (GFVTSFIGALFTIATLALPMW), and 100-120 (IACYATAFLVSALAIIFVFMI).

Belongs to the FrdD family. In terms of assembly, part of an enzyme complex containing four subunits: a flavoprotein (FrdA), an iron-sulfur protein (FrdB), and two hydrophobic anchor proteins (FrdC and FrdD).

It localises to the cell inner membrane. In terms of biological role, anchors the catalytic components of the fumarate reductase complex to the cell membrane, binds quinones. The sequence is that of Fumarate reductase subunit D from Photobacterium profundum (strain SS9).